Consider the following 58-residue polypeptide: Large ribosomal subunit protein uL24 (58 aa).

This sequence belongs to the universal ribosomal protein uL24 family. In terms of assembly, part of the 50S ribosomal subunit.

In terms of biological role, one of two assembly initiator proteins, it binds directly to the 5'-end of the 23S rRNA, where it nucleates assembly of the 50S subunit. Functionally, one of the proteins that surrounds the polypeptide exit tunnel on the outside of the subunit. The chain is Large ribosomal subunit protein uL24 (rplX) from Spiroplasma citri.